We begin with the raw amino-acid sequence, 172 residues long: Translation initiation factor IF-3 (172 aa).

It belongs to the IF-3 family. As to quaternary structure, monomer.

Its subcellular location is the cytoplasm. In terms of biological role, IF-3 binds to the 30S ribosomal subunit and shifts the equilibrium between 70S ribosomes and their 50S and 30S subunits in favor of the free subunits, thus enhancing the availability of 30S subunits on which protein synthesis initiation begins. This is Translation initiation factor IF-3 from Thermotoga maritima (strain ATCC 43589 / DSM 3109 / JCM 10099 / NBRC 100826 / MSB8).